The primary structure comprises 354 residues: Protein RecA (354 aa).

67–74 (GPESSGKT) is a binding site for ATP.

The protein belongs to the RecA family.

It localises to the cytoplasm. Functionally, can catalyze the hydrolysis of ATP in the presence of single-stranded DNA, the ATP-dependent uptake of single-stranded DNA by duplex DNA, and the ATP-dependent hybridization of homologous single-stranded DNAs. It interacts with LexA causing its activation and leading to its autocatalytic cleavage. The polypeptide is Protein RecA (Chlamydia muridarum (strain MoPn / Nigg)).